A 304-amino-acid chain; its full sequence is N-acetylmuramic acid 6-phosphate etherase (304 aa).

An SIS domain is found at 58 to 221; the sequence is IAERIHRGGR…STGVMIKLGK (164 aa). Residue glutamate 86 is the Proton donor of the active site. Glutamate 117 is an active-site residue.

This sequence belongs to the GCKR-like family. MurNAc-6-P etherase subfamily. As to quaternary structure, homodimer.

The enzyme catalyses N-acetyl-D-muramate 6-phosphate + H2O = N-acetyl-D-glucosamine 6-phosphate + (R)-lactate. It functions in the pathway amino-sugar metabolism; N-acetylmuramate degradation. In terms of biological role, specifically catalyzes the cleavage of the D-lactyl ether substituent of MurNAc 6-phosphate, producing GlcNAc 6-phosphate and D-lactate. In Clostridium beijerinckii (strain ATCC 51743 / NCIMB 8052) (Clostridium acetobutylicum), this protein is N-acetylmuramic acid 6-phosphate etherase.